A 171-amino-acid polypeptide reads, in one-letter code: 3-hydroxydecanoyl-[acyl-carrier-protein] dehydratase (171 aa).

Residue histidine 70 is part of the active site.

It belongs to the thioester dehydratase family. FabA subfamily. As to quaternary structure, homodimer.

It localises to the cytoplasm. It carries out the reaction a (3R)-hydroxyacyl-[ACP] = a (2E)-enoyl-[ACP] + H2O. The catalysed reaction is (3R)-hydroxydecanoyl-[ACP] = (2E)-decenoyl-[ACP] + H2O. The enzyme catalyses (2E)-decenoyl-[ACP] = (3Z)-decenoyl-[ACP]. The protein operates within lipid metabolism; fatty acid biosynthesis. Necessary for the introduction of cis unsaturation into fatty acids. Catalyzes the dehydration of (3R)-3-hydroxydecanoyl-ACP to E-(2)-decenoyl-ACP and then its isomerization to Z-(3)-decenoyl-ACP. Can catalyze the dehydratase reaction for beta-hydroxyacyl-ACPs with saturated chain lengths up to 16:0, being most active on intermediate chain length. The chain is 3-hydroxydecanoyl-[acyl-carrier-protein] dehydratase from Shewanella putrefaciens (strain CN-32 / ATCC BAA-453).